Here is a 228-residue protein sequence, read N- to C-terminus: Histidine decarboxylase (228 aa).

A substrate-binding site is contributed by His30. At Lys143 the chain carries N6-(pyridoxal phosphate)lysine.

The protein belongs to the group II decarboxylase family. In terms of assembly, homotetramer. Pyridoxal 5'-phosphate is required as a cofactor.

It catalyses the reaction L-histidine + H(+) = histamine + CO2. This chain is Histidine decarboxylase (hdc), found in Raoultella ornithinolytica (Klebsiella ornithinolytica).